The sequence spans 1337 residues: DNA-directed RNA polymerase subunit beta' (1337 aa).

4 residues coordinate Zn(2+): cysteine 60, cysteine 62, cysteine 75, and cysteine 78. Positions 536, 538, and 540 each coordinate Mg(2+). The Zn(2+) site is built by cysteine 895, cysteine 974, cysteine 981, and cysteine 984.

Belongs to the RNA polymerase beta' chain family. As to quaternary structure, the RNAP catalytic core consists of 2 alpha, 1 beta, 1 beta' and 1 omega subunit. When a sigma factor is associated with the core the holoenzyme is formed, which can initiate transcription. Requires Mg(2+) as cofactor. The cofactor is Zn(2+).

It catalyses the reaction RNA(n) + a ribonucleoside 5'-triphosphate = RNA(n+1) + diphosphate. Its function is as follows. DNA-dependent RNA polymerase catalyzes the transcription of DNA into RNA using the four ribonucleoside triphosphates as substrates. This chain is DNA-directed RNA polymerase subunit beta', found in Bifidobacterium adolescentis (strain ATCC 15703 / DSM 20083 / NCTC 11814 / E194a).